Consider the following 542-residue polypeptide: CTP synthase (542 aa).

The tract at residues 1–265 (MARYIFITGG…DSEVLCAFGI (265 aa)) is amidoligase domain. Serine 13 lines the CTP pocket. Serine 13 serves as a coordination point for UTP. 14–19 (SLGKGI) is a binding site for ATP. L-glutamine is bound at residue tyrosine 54. Aspartate 71 contacts ATP. Residues aspartate 71 and glutamate 139 each contribute to the Mg(2+) site. CTP contacts are provided by residues 146 to 148 (DIE), 186 to 191 (KTKPTQ), and lysine 222. UTP contacts are provided by residues 186 to 191 (KTKPTQ) and lysine 222. The region spanning 291-541 (TIAVVGKYTG…IEATVEQSRL (251 aa)) is the Glutamine amidotransferase type-1 domain. Residue alanine 353 coordinates L-glutamine. Cysteine 380 serves as the catalytic Nucleophile; for glutamine hydrolysis. Residues 381–384 (FGMQ), glutamate 404, and arginine 469 contribute to the L-glutamine site. Residues histidine 514 and glutamate 516 contribute to the active site.

The protein belongs to the CTP synthase family. In terms of assembly, homotetramer.

The enzyme catalyses UTP + L-glutamine + ATP + H2O = CTP + L-glutamate + ADP + phosphate + 2 H(+). It carries out the reaction L-glutamine + H2O = L-glutamate + NH4(+). The catalysed reaction is UTP + NH4(+) + ATP = CTP + ADP + phosphate + 2 H(+). The protein operates within pyrimidine metabolism; CTP biosynthesis via de novo pathway; CTP from UDP: step 2/2. Allosterically activated by GTP, when glutamine is the substrate; GTP has no effect on the reaction when ammonia is the substrate. The allosteric effector GTP functions by stabilizing the protein conformation that binds the tetrahedral intermediate(s) formed during glutamine hydrolysis. Inhibited by the product CTP, via allosteric rather than competitive inhibition. In terms of biological role, catalyzes the ATP-dependent amination of UTP to CTP with either L-glutamine or ammonia as the source of nitrogen. Regulates intracellular CTP levels through interactions with the four ribonucleotide triphosphates. The polypeptide is CTP synthase (Bartonella quintana (strain Toulouse) (Rochalimaea quintana)).